Here is a 136-residue protein sequence, read N- to C-terminus: Large ribosomal subunit protein uL16c (136 aa).

The span at 1–17 (MLSPKRVKFRKQHRGRM) shows a compositional bias: basic residues. The tract at residues 1 to 25 (MLSPKRVKFRKQHRGRMKGISTRGN) is disordered.

Belongs to the universal ribosomal protein uL16 family. Part of the 50S ribosomal subunit.

The protein localises to the plastid. The protein resides in the chloroplast. The sequence is that of Large ribosomal subunit protein uL16c from Anthoceros angustus (Hornwort).